The primary structure comprises 553 residues: Replication factor C large subunit (553 aa).

50–57 (GGPGVGKT) contributes to the ATP binding site. Residues 438 to 553 (GKRPGKPEAG…SKKQRTLFDF (116 aa)) are disordered. Over residues 442–451 (GKPEAGEPRE) the composition is skewed to basic and acidic residues. Over residues 503-513 (EAPMAAAMPAA) the composition is skewed to low complexity. The span at 532–553 (EPEKPPAAEDKCSKKQRTLFDF) shows a compositional bias: basic and acidic residues.

Belongs to the activator 1 small subunits family. RfcL subfamily. In terms of assembly, heteromultimer composed of small subunits (RfcS) and large subunits (RfcL).

Its function is as follows. Part of the RFC clamp loader complex which loads the PCNA sliding clamp onto DNA. The polypeptide is Replication factor C large subunit (Methanocella arvoryzae (strain DSM 22066 / NBRC 105507 / MRE50)).